Here is a 114-residue protein sequence, read N- to C-terminus: Large ribosomal subunit protein bL20c (114 aa).

Belongs to the bacterial ribosomal protein bL20 family.

The protein localises to the plastid. The protein resides in the cyanelle. Its function is as follows. Binds directly to 23S ribosomal RNA and is necessary for the in vitro assembly process of the 50S ribosomal subunit. It is not involved in the protein synthesizing functions of that subunit. In Cyanophora paradoxa, this protein is Large ribosomal subunit protein bL20c (rpl20).